The chain runs to 368 residues: Ubiquitin domain-containing protein UBFD1 (368 aa).

The disordered stretch occupies residues 106–139; that stretch reads SCDARGNLQPAPAQPPGDPAAQASVSNGEDAGGG. The Ubiquitin-like domain occupies 143 to 218; it reads ELVDLKIIWN…IMVVGSTIND (76 aa). Residues 231-263 form a disordered region; it reads QDAKAEENKKEPLCRQKQHRKVLDKGKPEDVMP. Basic and acidic residues-rich tracts occupy residues 233–244 and 251–260; these read AKAEENKKEPLC and KVLDKGKPED.

In Mus musculus (Mouse), this protein is Ubiquitin domain-containing protein UBFD1 (Ubfd1).